The chain runs to 267 residues: Beta-lactamase OXA-5 (267 aa).

The N-terminal stretch at 1 to 19 (MKTIAAYLVLVFYASTALS) is a signal peptide. The Acyl-ester intermediate role is filled by Ser67. Residue Lys70 is modified to N6-carboxylysine. 205–207 (KTG) contacts substrate.

This sequence belongs to the class-D beta-lactamase family.

It carries out the reaction a beta-lactam + H2O = a substituted beta-amino acid. With respect to regulation, inhibited by clavulanic acid. In terms of biological role, hydrolyzes both oxacillin and methicillin. In Pseudomonas aeruginosa, this protein is Beta-lactamase OXA-5 (bla).